The sequence spans 231 residues: uncharacterized protein (231 aa).

Helical transmembrane passes span 39–59, 70–90, 156–176, and 189–206; these read FCIS…YGPF, ALSL…VPVI, AIIS…GGSI, and IVAI…NMFF.

The protein belongs to the FliR/MopE/SpaR family.

Its subcellular location is the cell membrane. This is an uncharacterized protein from Escherichia coli (strain K12).